A 95-amino-acid chain; its full sequence is Aspartyl/glutamyl-tRNA(Asn/Gln) amidotransferase subunit C (95 aa).

This sequence belongs to the GatC family. In terms of assembly, heterotrimer of A, B and C subunits.

The catalysed reaction is L-glutamyl-tRNA(Gln) + L-glutamine + ATP + H2O = L-glutaminyl-tRNA(Gln) + L-glutamate + ADP + phosphate + H(+). The enzyme catalyses L-aspartyl-tRNA(Asn) + L-glutamine + ATP + H2O = L-asparaginyl-tRNA(Asn) + L-glutamate + ADP + phosphate + 2 H(+). Its function is as follows. Allows the formation of correctly charged Asn-tRNA(Asn) or Gln-tRNA(Gln) through the transamidation of misacylated Asp-tRNA(Asn) or Glu-tRNA(Gln) in organisms which lack either or both of asparaginyl-tRNA or glutaminyl-tRNA synthetases. The reaction takes place in the presence of glutamine and ATP through an activated phospho-Asp-tRNA(Asn) or phospho-Glu-tRNA(Gln). The sequence is that of Aspartyl/glutamyl-tRNA(Asn/Gln) amidotransferase subunit C from Bradyrhizobium sp. (strain BTAi1 / ATCC BAA-1182).